A 91-amino-acid polypeptide reads, in one-letter code: Acyl carrier protein AsbD (91 aa).

Residues 4–82 (EALKNAVLKI…SLLDFMEELQ (79 aa)) enclose the Carrier domain. O-(pantetheine 4'-phosphoryl)serine is present on Ser-40.

Belongs to the acyl carrier protein (ACP) family. In terms of processing, activated by the transfer of a 4'-phosphopantetheine group from CoA to Ser-40.

Its pathway is siderophore biosynthesis; petrobactin biosynthesis. In terms of biological role, involved in the biosynthesis of petrobactin, a catecholate siderophore that functions in both iron acquisition and virulence. Aryl-carrier protein that activates 3,4-dihydroxybenzoate (3,4-DHBA) prior to its incorporation into petrobactin. This is Acyl carrier protein AsbD from Bacillus anthracis.